The primary structure comprises 504 residues: ATP-dependent rRNA helicase RRP3 (504 aa).

Residues 34–62 are compositionally biased toward low complexity; it reads ASASSAASTKESLPVSETISISTSETPVS. Residues 34–99 form a disordered region; sequence ASASSAASTK…SSSSPPSVQS (66 aa). The segment covering 68 to 79 has biased composition (basic and acidic residues); it reads SNKEDLSTKKDQ. Positions 80–99 are enriched in low complexity; that stretch reads SSASSSSSTSSSSSPPSVQS. The Q motif signature appears at 98–126; sequence QSFTEFDLVPELLESIQSLKYTQPTPIQA. The region spanning 129–301 is the Helicase ATP-binding domain; the sequence is IPHALQGKDI…RSLNSPVQVE (173 aa). 142 to 149 contacts ATP; sequence AETGSGKT. Positions 248–251 match the DEAD box motif; the sequence is DEVD. The 145-residue stretch at 327–471 folds into the Helicase C-terminal domain; that stretch reads RLIQIVNLDS…DLPLDEMQGL (145 aa).

This sequence belongs to the DEAD box helicase family. DDX47/RRP3 subfamily. In terms of assembly, interacts with the SSU processome.

It is found in the nucleus. The catalysed reaction is ATP + H2O = ADP + phosphate + H(+). Functionally, ATP-dependent rRNA helicase required for pre-ribosomal RNA processing. Involved in the maturation of the 35S-pre-rRNA and to its cleavage to mature 18S rRNA. This Lodderomyces elongisporus (strain ATCC 11503 / CBS 2605 / JCM 1781 / NBRC 1676 / NRRL YB-4239) (Yeast) protein is ATP-dependent rRNA helicase RRP3.